A 379-amino-acid chain; its full sequence is Cytochrome b (379 aa).

4 helical membrane passes run 33 to 53 (FGSL…FLAM), 77 to 98 (WLIR…FIHV), 113 to 133 (WNIG…GYVL), and 178 to 198 (FFAF…VHLL). Residues His83 and His97 each coordinate heme b. His182 and His196 together coordinate heme b. His201 provides a ligand contact to a ubiquinone. Helical transmembrane passes span 226 to 246 (IKDL…ALFF), 288 to 308 (LGGV…PLLN), 320 to 340 (ITQT…WIGG), and 347 to 367 (FTMI…ILXP).

Belongs to the cytochrome b family. In terms of assembly, the cytochrome bc1 complex contains 11 subunits: 3 respiratory subunits (MT-CYB, CYC1 and UQCRFS1), 2 core proteins (UQCRC1 and UQCRC2) and 6 low-molecular weight proteins (UQCRH/QCR6, UQCRB/QCR7, UQCRQ/QCR8, UQCR10/QCR9, UQCR11/QCR10 and a cleavage product of UQCRFS1). This cytochrome bc1 complex then forms a dimer. Heme b serves as cofactor.

Its subcellular location is the mitochondrion inner membrane. Its function is as follows. Component of the ubiquinol-cytochrome c reductase complex (complex III or cytochrome b-c1 complex) that is part of the mitochondrial respiratory chain. The b-c1 complex mediates electron transfer from ubiquinol to cytochrome c. Contributes to the generation of a proton gradient across the mitochondrial membrane that is then used for ATP synthesis. In Akodon toba (Chaco grass mouse), this protein is Cytochrome b (MT-CYB).